We begin with the raw amino-acid sequence, 293 residues long: ATP synthase gamma chain (293 aa).

The protein belongs to the ATPase gamma chain family. As to quaternary structure, F-type ATPases have 2 components, CF(1) - the catalytic core - and CF(0) - the membrane proton channel. CF(1) has five subunits: alpha(3), beta(3), gamma(1), delta(1), epsilon(1). CF(0) has three main subunits: a, b and c.

The protein resides in the cell membrane. Its function is as follows. Produces ATP from ADP in the presence of a proton gradient across the membrane. The gamma chain is believed to be important in regulating ATPase activity and the flow of protons through the CF(0) complex. The protein is ATP synthase gamma chain of Methylacidiphilum infernorum (isolate V4) (Methylokorus infernorum (strain V4)).